A 215-amino-acid polypeptide reads, in one-letter code: Adenylate kinase (215 aa).

10-15 (GAGKGT) serves as a coordination point for ATP. The interval 30–59 (STGDMLRAAIKAGTPLGLEAKKIIDEGGLV) is NMP. AMP-binding positions include T31, R36, 57–59 (GLV), 85–88 (GFPR), and Q92. An LID region spans residues 122–159 (GRRVHLASGRTYHVTYNPPKVEGKDDVTGEDLIQRDDD). ATP-binding positions include R123 and 132 to 133 (TY). Residues R156 and R167 each contribute to the AMP site. ATP is bound at residue Q200.

This sequence belongs to the adenylate kinase family. In terms of assembly, monomer.

Its subcellular location is the cytoplasm. It carries out the reaction AMP + ATP = 2 ADP. Its pathway is purine metabolism; AMP biosynthesis via salvage pathway; AMP from ADP: step 1/1. In terms of biological role, catalyzes the reversible transfer of the terminal phosphate group between ATP and AMP. Plays an important role in cellular energy homeostasis and in adenine nucleotide metabolism. This Neisseria meningitidis serogroup C (strain 053442) protein is Adenylate kinase.